The chain runs to 113 residues: UPF0122 protein M6_Spy0905 (113 aa).

The protein belongs to the UPF0122 family.

Functionally, might take part in the signal recognition particle (SRP) pathway. This is inferred from the conservation of its genetic proximity to ftsY/ffh. May be a regulatory protein. This Streptococcus pyogenes serotype M6 (strain ATCC BAA-946 / MGAS10394) protein is UPF0122 protein M6_Spy0905.